Consider the following 236-residue polypeptide: Small ribosomal subunit protein uS2c (236 aa).

The protein belongs to the universal ribosomal protein uS2 family.

It localises to the plastid. Its subcellular location is the chloroplast. This is Small ribosomal subunit protein uS2c (rps2) from Lactuca sativa (Garden lettuce).